Reading from the N-terminus, the 278-residue chain is Ribonuclease HII (278 aa).

The RNase H type-2 domain maps to 71–259; sequence WPVAGCDEAG…VAAAWDKHAP (189 aa). A divalent metal cation contacts are provided by aspartate 77, glutamate 78, and aspartate 168.

It belongs to the RNase HII family. Mn(2+) serves as cofactor. Mg(2+) is required as a cofactor.

The protein localises to the cytoplasm. The catalysed reaction is Endonucleolytic cleavage to 5'-phosphomonoester.. Its function is as follows. Endonuclease that specifically degrades the RNA of RNA-DNA hybrids. The sequence is that of Ribonuclease HII from Rhodopseudomonas palustris (strain BisA53).